We begin with the raw amino-acid sequence, 685 residues long: DNA ligase (685 aa).

Residues 47 to 51 (DSEYD), 96 to 97 (SL), and Glu-125 contribute to the NAD(+) site. Lys-127 serves as the catalytic N6-AMP-lysine intermediate. The NAD(+) site is built by Arg-148, Glu-185, Lys-304, and Lys-328. Zn(2+) contacts are provided by Cys-422, Cys-425, Cys-440, and Cys-446. Residues 605-685 (ADAQPLKGQT…ALLALFAANR (81 aa)) enclose the BRCT domain.

It belongs to the NAD-dependent DNA ligase family. LigA subfamily. Mg(2+) serves as cofactor. Mn(2+) is required as a cofactor.

The catalysed reaction is NAD(+) + (deoxyribonucleotide)n-3'-hydroxyl + 5'-phospho-(deoxyribonucleotide)m = (deoxyribonucleotide)n+m + AMP + beta-nicotinamide D-nucleotide.. Its function is as follows. DNA ligase that catalyzes the formation of phosphodiester linkages between 5'-phosphoryl and 3'-hydroxyl groups in double-stranded DNA using NAD as a coenzyme and as the energy source for the reaction. It is essential for DNA replication and repair of damaged DNA. The chain is DNA ligase from Shewanella sp. (strain W3-18-1).